We begin with the raw amino-acid sequence, 427 residues long: Tegument protein VP16 homolog (427 aa).

This sequence belongs to the herpesviridae tegument protein VP16 protein family.

Its subcellular location is the virion tegument. It localises to the host nucleus. Functionally, transcriptional activator of immediate-early (IE) gene products (alpha genes). Acts as a key activator of lytic infection by initiating the lytic program through the assembly of the transcriptional regulatory VP16-induced complex composed of VP16 and two cellular factors, HCFC1 and POU2F1. VP16-induced complex represents a regulatory switch: when it is on, it promotes IE-gene expression and thus lytic infection, and when it is off, it limits IE-gene transcription favoring latent infection. In terms of biological role, may play a role in the aggregation of tegument proteins around nucleocapsids during virus morphogenesis. This chain is Tegument protein VP16 homolog (MDV061), found in Gallus gallus (Chicken).